We begin with the raw amino-acid sequence, 279 residues long: Putative F-box protein At1g50880 (279 aa).

Residues 19–69 enclose the F-box domain; sequence SSSMSSIPLDVTSKILAKLPAKSVLRARCVSKQWSSISTDPYFISNMFPKQ.

This chain is Putative F-box protein At1g50880, found in Arabidopsis thaliana (Mouse-ear cress).